The primary structure comprises 4760 residues: Nonribosomal peptide synthetase cm3A (4760 aa).

Residues 1 to 12 (MKHLASSENMPT) are compositionally biased toward polar residues. Residues 1-24 (MKHLASSENMPTPAQDRAPSPSAM) are disordered. Positions 19-95 (PSPSAMQQEI…ELSRSAECQL (77 aa)) constitute a Carrier 1 domain. Ser56 is modified (O-(pantetheine 4'-phosphoryl)serine). Condensation regions lie at residues 142–570 (QDIF…EIEQ) and 178–571 (PGLS…IEQL). The tract at residues 591–984 (DEQARLCPDA…GRRDTQVKLR (394 aa)) is adenylation 1. Positions 1120–1197 (REATTLQLQI…KLTEKLGVPE (78 aa)) constitute a Carrier 2 domain. Ser1158 is modified (O-(pantetheine 4'-phosphoryl)serine). Condensation stretches follow at residues 1210 to 1654 (FPLS…KTPS) and 1689 to 2125 (VEDM…NVTT). An adenylation 2 region spans residues 2171–2551 (DGDLTYFELD…DRKDWQIKIR (381 aa)). In terms of domain architecture, Carrier 3 spans 2684–2762 (LPSSETEKTV…ELAHAIDQRS (79 aa)). Ser2721 is modified (O-(pantetheine 4'-phosphoryl)serine). The interval 2811 to 3203 (VEDIYPCTPL…RFKHIFGQLS (393 aa)) is condensation 4. Positions 3255-3647 (SATTPDRPAV…GRADQQLKIR (393 aa)) are adenylation 3. In terms of domain architecture, Carrier 4 spans 3783–3857 (TRTEELMQSV…QLAQRATTDA (75 aa)). Condensation regions lie at residues 3869–4296 (EFRL…TLLC) and 4340–4757 (EDIY…EEMG).

The protein belongs to the nrps family.

Its pathway is secondary metabolite biosynthesis. Its function is as follows. Nonribosomal peptide synthetase; part of the gene cluster that mediates the biosynthesis of beauveriolides I and III, cyclodepsipeptides acting as inhibitors of the acyl-CoA:cholesterol acyltransferase. The HR-PKS cm3B initiates the biosynthesis of beauveriolides by iteratively catalyzing the formation of the linear polyketide chain. The ATP-dependent acetyl-CoA ligase cm3D converts the polyketide carboxylic acid to a CoA thioester which id shuttled to the first T domain in the NRPS cm3A by the acetyltransferase cm3C. Cm3A contains 13 domains and assembles the polyketide chain, L-phenylalanine, L-alanine, and D-leucine (or D-allo-isoleucine) to form beauveriolide I (or beauveriolide III). The production of both beauveriolides I and III suggests the substrate adaptability of cm3B, using different amino acids as substrates. The chain is Nonribosomal peptide synthetase cm3A from Cordyceps militaris (strain CM01) (Caterpillar fungus).